The sequence spans 286 residues: Bifunctional protein FolD (286 aa).

NADP(+) contacts are provided by residues 164 to 166, serine 193, and isoleucine 234; that span reads GRS.

The protein belongs to the tetrahydrofolate dehydrogenase/cyclohydrolase family. In terms of assembly, homodimer.

It catalyses the reaction (6R)-5,10-methylene-5,6,7,8-tetrahydrofolate + NADP(+) = (6R)-5,10-methenyltetrahydrofolate + NADPH. The enzyme catalyses (6R)-5,10-methenyltetrahydrofolate + H2O = (6R)-10-formyltetrahydrofolate + H(+). Its pathway is one-carbon metabolism; tetrahydrofolate interconversion. Catalyzes the oxidation of 5,10-methylenetetrahydrofolate to 5,10-methenyltetrahydrofolate and then the hydrolysis of 5,10-methenyltetrahydrofolate to 10-formyltetrahydrofolate. The sequence is that of Bifunctional protein FolD from Maridesulfovibrio salexigens (strain ATCC 14822 / DSM 2638 / NCIMB 8403 / VKM B-1763) (Desulfovibrio salexigens).